The following is a 561-amino-acid chain: Glutamine--tRNA ligase (561 aa).

The short motif at 34–44 (PEPNGYLHIGH) is the 'HIGH' region element. ATP-binding positions include 35–37 (EPN) and 41–47 (HIGHAKS). Residues aspartate 67 and tyrosine 212 each contribute to the L-glutamine site. Residues threonine 231, 261-262 (RL), and 269-271 (MSK) contribute to the ATP site. A 'KMSKS' region motif is present at residues 268–272 (VMSKR).

The protein belongs to the class-I aminoacyl-tRNA synthetase family. As to quaternary structure, monomer.

It is found in the cytoplasm. The enzyme catalyses tRNA(Gln) + L-glutamine + ATP = L-glutaminyl-tRNA(Gln) + AMP + diphosphate. The chain is Glutamine--tRNA ligase from Idiomarina loihiensis (strain ATCC BAA-735 / DSM 15497 / L2-TR).